The primary structure comprises 254 residues: MSLTNKNVVFVAGLGGIGLDTSRELVKRDLKNLVILDRIDNPAAIAELKAVNPKVTVTFYPYDVTVPVAETTKLLKTIFAQIKTIDVLINGAGILDDHQIERTIAVNYTGLVNTTTAILDFWDKRKGGPGGIICNIGSVTGFNAIYQVPVYSGSKAAVVNFTSSLAKLAPITGVTAYTVNPGITKTTLVHKFNSWLDVEPRVAEKLLEHPTQTSQQCAENFVKAIELNKNGAIWKLDLGTLEPITWTKHWDSGI.

10-33 (FVAGLGGIGLDTSRELVKRDLKNL) is an NAD(+) binding site. Ser138 provides a ligand contact to substrate. Tyr151 acts as the Proton acceptor in catalysis.

This sequence belongs to the short-chain dehydrogenases/reductases (SDR) family. In terms of assembly, homodimer.

The enzyme catalyses a primary alcohol + NAD(+) = an aldehyde + NADH + H(+). The catalysed reaction is a secondary alcohol + NAD(+) = a ketone + NADH + H(+). The polypeptide is Alcohol dehydrogenase (Adh) (Drosophila guanche (Fruit fly)).